A 797-amino-acid chain; its full sequence is Calcium-transporting ATPase CtpE (797 aa).

3 helical membrane passes run 55-75 (LLLI…LLII), 215-235 (ILQF…YTQL), and 254-274 (VPMV…VGVV). The 4-aspartylphosphate intermediate role is filled by D301. The Mg(2+) site is built by D301, T303, and D536. 6 helical membrane passes run 601-621 (TVYS…AIPL), 633-653 (IHVT…LSLA), 667-687 (VMTS…VTYL), 703-723 (ASTA…AVIA), 729-749 (WRLA…SLPL), and 764-784 (TSIA…MWWI).

This sequence belongs to the cation transport ATPase (P-type) (TC 3.A.3) family.

The protein localises to the cell membrane. The catalysed reaction is Ca(2+)(in) + ATP + H2O = Ca(2+)(out) + ADP + phosphate + H(+). In terms of biological role, P-type ATPase involved in specific uptake of calcium. The polypeptide is Calcium-transporting ATPase CtpE (ctpE) (Mycobacterium bovis (strain ATCC BAA-935 / AF2122/97)).